Here is a 279-residue protein sequence, read N- to C-terminus: Putative pyruvate, phosphate dikinase regulatory protein (279 aa).

Gly-153–Thr-160 contacts ADP.

It belongs to the pyruvate, phosphate/water dikinase regulatory protein family. PDRP subfamily.

The catalysed reaction is N(tele)-phospho-L-histidyl/L-threonyl-[pyruvate, phosphate dikinase] + ADP = N(tele)-phospho-L-histidyl/O-phospho-L-threonyl-[pyruvate, phosphate dikinase] + AMP + H(+). It carries out the reaction N(tele)-phospho-L-histidyl/O-phospho-L-threonyl-[pyruvate, phosphate dikinase] + phosphate + H(+) = N(tele)-phospho-L-histidyl/L-threonyl-[pyruvate, phosphate dikinase] + diphosphate. Its function is as follows. Bifunctional serine/threonine kinase and phosphorylase involved in the regulation of the pyruvate, phosphate dikinase (PPDK) by catalyzing its phosphorylation/dephosphorylation. The polypeptide is Putative pyruvate, phosphate dikinase regulatory protein (Bartonella bacilliformis (strain ATCC 35685 / KC583 / Herrer 020/F12,63)).